We begin with the raw amino-acid sequence, 172 residues long: C-phycocyanin beta chain (172 aa).

Asn-72 carries the post-translational modification N4-methylasparagine. (2R,3E)-phycocyanobilin-binding residues include Cys-82 and Cys-153.

This sequence belongs to the phycobiliprotein family. As to quaternary structure, heterodimer of an alpha and a beta subunit, which further assembles into trimers and the trimers into hexamers. The basic functional unit of phycobiliproteins is a ring-shaped hexamer formed from two back-to-back trimers contacting via the alpha chain subunits. The trimers are composed of alpha/beta subunit heterodimers arranged around a three-fold axis of symmetry. The phycoerythrins also contain a gamma subunit which is located in the center of the hexamer. Post-translationally, contains two covalently linked bilin chromophores.

The protein resides in the plastid. It localises to the chloroplast thylakoid membrane. Its function is as follows. Light-harvesting photosynthetic bile pigment-protein from the phycobiliprotein complex (phycobilisome, PBS). Phycocyanin is the major phycobiliprotein in the PBS rod. In Porphyra purpurea (Red seaweed), this protein is C-phycocyanin beta chain (cpcB).